The chain runs to 88 residues: HssA/B-like protein 19 (88 aa).

The protein belongs to the hssA/B family.

The polypeptide is HssA/B-like protein 19 (hssl19) (Dictyostelium discoideum (Social amoeba)).